A 194-amino-acid polypeptide reads, in one-letter code: 21 kDa hemolysin (194 aa).

An N-terminal signal peptide occupies residues 1–19; sequence MRTRSRSTVRPLWPPPSPA. 2 BON domains span residues 49-118 and 127-194; these read DDEV…RTGE and IDSW…NYVQ.

It is found in the periplasm. This Actinobacillus pleuropneumoniae (Haemophilus pleuropneumoniae) protein is 21 kDa hemolysin (hly).